The sequence spans 467 residues: 3-isopropylmalate dehydratase large subunit (467 aa).

[4Fe-4S] cluster-binding residues include C347, C407, and C410.

Belongs to the aconitase/IPM isomerase family. LeuC type 1 subfamily. In terms of assembly, heterodimer of LeuC and LeuD. The cofactor is [4Fe-4S] cluster.

The enzyme catalyses (2R,3S)-3-isopropylmalate = (2S)-2-isopropylmalate. Its pathway is amino-acid biosynthesis; L-leucine biosynthesis; L-leucine from 3-methyl-2-oxobutanoate: step 2/4. Catalyzes the isomerization between 2-isopropylmalate and 3-isopropylmalate, via the formation of 2-isopropylmaleate. This is 3-isopropylmalate dehydratase large subunit from Picosynechococcus sp. (strain ATCC 27264 / PCC 7002 / PR-6) (Agmenellum quadruplicatum).